A 95-amino-acid chain; its full sequence is Small ribosomal subunit protein bS20 (95 aa).

It belongs to the bacterial ribosomal protein bS20 family.

Binds directly to 16S ribosomal RNA. This Ehrlichia canis (strain Jake) protein is Small ribosomal subunit protein bS20.